Reading from the N-terminus, the 160-residue chain is MATQNGSPTDNTAPALNVLVQYIKDFSFENPNAPRSLGAPQGQPDVNIQINVNARPLAPGEFEVELKIEGGAAVQGNTLFAFDLTYGGIFRLMNVPEQSLQPVVLIECPRLLFPFARQIVADAVRGGGFPPLMIDPVDFAALYQQRMMAEAQNLQTAGQA.

This sequence belongs to the SecB family. In terms of assembly, homotetramer, a dimer of dimers. One homotetramer interacts with 1 SecA dimer.

The protein resides in the cytoplasm. One of the proteins required for the normal export of preproteins out of the cell cytoplasm. It is a molecular chaperone that binds to a subset of precursor proteins, maintaining them in a translocation-competent state. It also specifically binds to its receptor SecA. The polypeptide is Protein-export protein SecB (Azorhizobium caulinodans (strain ATCC 43989 / DSM 5975 / JCM 20966 / LMG 6465 / NBRC 14845 / NCIMB 13405 / ORS 571)).